The primary structure comprises 216 residues: Uracil phosphoribosyltransferase (216 aa).

5-phospho-alpha-D-ribose 1-diphosphate contacts are provided by residues R85, R110, and 135 to 143 (DPMVATGYS). Uracil-binding positions include I200 and 205-207 (GDA). A 5-phospho-alpha-D-ribose 1-diphosphate-binding site is contributed by D206.

It belongs to the UPRTase family. Mg(2+) serves as cofactor.

The enzyme catalyses UMP + diphosphate = 5-phospho-alpha-D-ribose 1-diphosphate + uracil. It participates in pyrimidine metabolism; UMP biosynthesis via salvage pathway; UMP from uracil: step 1/1. Allosterically activated by GTP. In terms of biological role, catalyzes the conversion of uracil and 5-phospho-alpha-D-ribose 1-diphosphate (PRPP) to UMP and diphosphate. This is Uracil phosphoribosyltransferase from Paraburkholderia phytofirmans (strain DSM 17436 / LMG 22146 / PsJN) (Burkholderia phytofirmans).